The following is a 484-amino-acid chain: Sperm motility kinase 1 (484 aa).

Residues 8-256 (YEMLETIGQG…VAEVMVHPWI (249 aa)) enclose the Protein kinase domain. Residues 14–22 (IGQGGCAKV) and K37 each bind ATP. D127 acts as the Proton acceptor in catalysis. The UBA domain occupies 274–314 (KPDPAIVKPMGHIGFQAQDIEDSLRQRKFNETMASYCLLKK). Polar residues predominate over residues 423–434 (IDESTEGHTSAS). The disordered stretch occupies residues 423–447 (IDESTEGHTSASAEDKPVHSRGWPR).

Belongs to the protein kinase superfamily. Tyr protein kinase family. Smok subfamily. In terms of tissue distribution, testis-specific. Expressed in the testis from 22 days postpartum (22 dpp).

It carries out the reaction L-seryl-[protein] + ATP = O-phospho-L-seryl-[protein] + ADP + H(+). The enzyme catalyses L-threonyl-[protein] + ATP = O-phospho-L-threonyl-[protein] + ADP + H(+). Functionally, may play a role in sperm motility, especially in the regulation of flagellar function. This chain is Sperm motility kinase 1 (Smok1), found in Mus musculus (Mouse).